Reading from the N-terminus, the 156-residue chain is Small ribosomal subunit protein uS7 (156 aa).

The protein belongs to the universal ribosomal protein uS7 family. In terms of assembly, part of the 30S ribosomal subunit. Contacts proteins S9 and S11.

Its function is as follows. One of the primary rRNA binding proteins, it binds directly to 16S rRNA where it nucleates assembly of the head domain of the 30S subunit. Is located at the subunit interface close to the decoding center, probably blocks exit of the E-site tRNA. This chain is Small ribosomal subunit protein uS7, found in Marinobacter nauticus (strain ATCC 700491 / DSM 11845 / VT8) (Marinobacter aquaeolei).